Consider the following 874-residue polypeptide: Dynein regulatory complex subunit 7 (874 aa).

A disordered region spans residues 1 to 20 (MEVLREKVEEEEEAEREEAA). 2 coiled-coil regions span residues 1–67 (MEVL…SAEL) and 257–297 (RFEQ…DALH). Residues 386 to 400 (TEEDDSGINDEDDVE) show a composition bias toward acidic residues. The segment at 386 to 410 (TEEDDSGINDEDDVENLGKEDEDKS) is disordered. Residues 401 to 410 (NLGKEDEDKS) are compositionally biased toward basic and acidic residues.

The protein belongs to the DRC7 family. Component of the nexin-dynein regulatory complex (N-DRC). Interacts with TCTE1/DRC5. Interacts with DRC3 and GAS8/DRC4. As to expression, expressed in the testis.

Its subcellular location is the cell projection. It is found in the cilium. It localises to the flagellum. The protein resides in the cytoplasm. The protein localises to the cytoskeleton. Its subcellular location is the cilium axoneme. It is found in the flagellum axoneme. Functionally, component of the nexin-dynein regulatory complex (N-DRC) a key regulator of ciliary/flagellar motility which maintains the alignment and integrity of the distal axoneme and regulates microtubule sliding in motile axonemes. Involved in the regulation of flagellar motility. Essential for male fertility, sperm head morphogenesis and sperm flagellum formation. This Pan troglodytes (Chimpanzee) protein is Dynein regulatory complex subunit 7 (DRC7).